The chain runs to 1603 residues: Vitellogenin-3 (1603 aa).

Positions 1-15 (MKSIIIASLVALAIA) are cleaved as a signal peptide. Residues 24-685 (FSPKSEYVYK…EKNAFLPKEV (662 aa)) form the Vitellogenin domain. The N-linked (GlcNAc...) asparagine glycan is linked to Asn-1266. The VWFD domain occupies 1306–1475 (ATCKVGQSEV…SYLLKNEECE (170 aa)). 2 disulfides stabilise this stretch: Cys-1308–Cys-1438 and Cys-1330–Cys-1474.

As to expression, expressed in the intestine of adult hermaphrodites.

The protein resides in the secreted. Precursor of the egg-yolk proteins that are sources of nutrients during embryonic development. Together with other vitellogenins, may play a role in modulating life-span, acting via induction of autophagy and lysosomal lipolysis. In Caenorhabditis elegans, this protein is Vitellogenin-3 (vit-3).